A 510-amino-acid chain; its full sequence is Cobyric acid synthase (510 aa).

The GATase cobBQ-type domain maps to cysteine 249–alanine 458. The Nucleophile role is filled by cysteine 336. The active site involves histidine 450.

The protein belongs to the CobB/CobQ family. CobQ subfamily.

It participates in cofactor biosynthesis; adenosylcobalamin biosynthesis. Functionally, catalyzes amidations at positions B, D, E, and G on adenosylcobyrinic A,C-diamide. NH(2) groups are provided by glutamine, and one molecule of ATP is hydrogenolyzed for each amidation. This Shewanella oneidensis (strain ATCC 700550 / JCM 31522 / CIP 106686 / LMG 19005 / NCIMB 14063 / MR-1) protein is Cobyric acid synthase.